A 129-amino-acid polypeptide reads, in one-letter code: Large ribosomal subunit protein bL12 (129 aa).

The protein belongs to the bacterial ribosomal protein bL12 family. In terms of assembly, homodimer. Part of the ribosomal stalk of the 50S ribosomal subunit. Forms a multimeric L10(L12)X complex, where L10 forms an elongated spine to which 2 to 4 L12 dimers bind in a sequential fashion. Binds GTP-bound translation factors.

Functionally, forms part of the ribosomal stalk which helps the ribosome interact with GTP-bound translation factors. Is thus essential for accurate translation. This is Large ribosomal subunit protein bL12 from Treponema pallidum (strain Nichols).